A 306-amino-acid polypeptide reads, in one-letter code: Aspartate carbamoyltransferase catalytic subunit (306 aa).

The carbamoyl phosphate site is built by Arg55 and Thr56. Lys85 serves as a coordination point for L-aspartate. Carbamoyl phosphate is bound by residues Arg106, His133, and Gln136. L-aspartate is bound by residues Arg166 and Arg228. The carbamoyl phosphate site is built by Leu264 and Pro265.

This sequence belongs to the aspartate/ornithine carbamoyltransferase superfamily. ATCase family. In terms of assembly, heterododecamer (2C3:3R2) of six catalytic PyrB chains organized as two trimers (C3), and six regulatory PyrI chains organized as three dimers (R2).

It catalyses the reaction carbamoyl phosphate + L-aspartate = N-carbamoyl-L-aspartate + phosphate + H(+). It functions in the pathway pyrimidine metabolism; UMP biosynthesis via de novo pathway; (S)-dihydroorotate from bicarbonate: step 2/3. Its function is as follows. Catalyzes the condensation of carbamoyl phosphate and aspartate to form carbamoyl aspartate and inorganic phosphate, the committed step in the de novo pyrimidine nucleotide biosynthesis pathway. The chain is Aspartate carbamoyltransferase catalytic subunit from Serratia marcescens.